A 322-amino-acid polypeptide reads, in one-letter code: MRFKGLDLNLLVALDRLMTERKLTAAARAINLSQPAMSAAISRWRDYFRDDLFIIQRRELNPTPAAEPLAPVVREALLHIQLSVIAWDPINPAEFDRRFRIILSDFMALVFFEKIIVRLAREAPGVSFKLLPLDDDPEELLRRGDVDFLILPDLFMSGAHRKARLFEERLVCVGCSTNEQLQGKLFLEQYMSMGHVAAKFGRGLKPSVEQWLLLQQGLKRRIELVVPGFNLIPPLLSGTNRIATIPLRLVKHYEQTIPLRIIEHPLPLLSFTEAVQWPALHNSDPGNIWMREIMIQEASRHWNPRPKVVRLKRPRSFHSRSS.

In terms of domain architecture, HTH lysR-type spans 6–63 (LDLNLLVALDRLMTERKLTAAARAINLSQPAMSAAISRWRDYFRDDLFIIQRRELNPT). The segment at residues 23-42 (LTAAARAINLSQPAMSAAIS) is a DNA-binding region (H-T-H motif).

It belongs to the LysR transcriptional regulatory family.

In terms of biological role, nodD regulates the expression of the nodABCFE genes which encode other nodulation proteins. NodD is also a negative regulator of its own expression. Binds flavonoids as inducers. This Rhizobium leguminosarum protein is Nodulation protein D (nodD).